Reading from the N-terminus, the 257-residue chain is Isoprenyl transferase (257 aa).

Asp33 is a catalytic residue. Asp33 provides a ligand contact to Mg(2+). Substrate-binding positions include 34 to 37 (GNGR), Trp38, Arg46, His50, and 78 to 80 (STE). The active-site Proton acceptor is the Asn81. Substrate-binding positions include Trp82, Arg84, Arg204, and 210 to 212 (RLS). Glu223 contacts Mg(2+).

This sequence belongs to the UPP synthase family. As to quaternary structure, homodimer. It depends on Mg(2+) as a cofactor.

Functionally, catalyzes the condensation of isopentenyl diphosphate (IPP) with allylic pyrophosphates generating different type of terpenoids. The sequence is that of Isoprenyl transferase from Clostridium acetobutylicum (strain ATCC 824 / DSM 792 / JCM 1419 / IAM 19013 / LMG 5710 / NBRC 13948 / NRRL B-527 / VKM B-1787 / 2291 / W).